The sequence spans 606 residues: MSPPRRVSFPPDTLQEDPPLADSPLSSPKLPEYDRQSSSTPIVSSNLPTDTTNSASAGPRRRQQPSRQVTLDASPPSATRRETTESARTQRSRAGSRRTSNSLDPNPGLMRRVTTVLFTPPKKIGKAPTYWGSMKAAITSTWLNVLLVFIPIGWALYLAKHNGGKDSISDTAVFCCTFIAIIPLAGLLGFATEEAALRLGQTLGGLLNATLGNAVELIVAILALIKCELQVVQSSLVGSILSNILLVLGMCFFAGGVRFAEQAIKSTAAQLNASLLLIAVIAVLIPSAFHFSISSSTSNTDASELANGEGADLLSMSHAVSILLLILYLGYLLFQMWTHATYYVDDAVTGSTQYPEAITNVSEKLKFRNFHRRKHDEEESYSTATTVSDAAVPPSARAEGGEVPATHGPGTAAAETGNRVEHEDAEEEEEEETPQMNVVCTIALMVIDTVLVGVTAEFLVDSINGMVESNPSLSAEWVGLILLPIVGNAAEHFTAVSVSVKDKLDLSISVAVGSSIQIALFVIPVIELLAWTIGKPMTLLFDPYESIVLFLSVLIVNQTLADGRSNWMEGMVLMMLYIIIAVSFWYYPGSTTATLLGCQDSSSVTG.

The segment at Met-1 to Met-110 is disordered. Topologically, residues Met-1–Ala-137 are cytoplasmic. The segment covering Pro-18–Leu-30 has biased composition (low complexity). Positions Gln-36–Ser-56 are enriched in polar residues. A helical transmembrane segment spans residues Ile-138 to Leu-158. Over Ala-159–Asp-170 the chain is Vacuolar. A helical membrane pass occupies residues Thr-171 to Ala-191. Residues Thr-192–Gly-204 are Cytoplasmic-facing. A helical membrane pass occupies residues Gly-205–Ile-225. Over Lys-226–Leu-236 the chain is Vacuolar. A helical membrane pass occupies residues Val-237–Val-257. Topologically, residues Arg-258 to Asn-272 are cytoplasmic. The helical transmembrane segment at Ala-273 to Ile-293 threads the bilayer. At Ser-294–Leu-313 the chain is on the vacuolar side. Residues Leu-314 to Phe-334 form a helical membrane-spanning segment. At Gln-335–Asn-437 the chain is on the cytoplasmic side. Residues Asp-376 to Pro-434 form a disordered region. The segment covering Glu-423–Thr-433 has biased composition (acidic residues). A helical transmembrane segment spans residues Val-438–Phe-458. Residues Leu-459–Trp-477 are Vacuolar-facing. The helical transmembrane segment at Val-478–Val-498 threads the bilayer. Residues Ser-499–Asp-505 lie on the Cytoplasmic side of the membrane. The helical transmembrane segment at Leu-506 to Ile-526 threads the bilayer. Residues Glu-527–Lys-535 lie on the Vacuolar side of the membrane. The helical transmembrane segment at Pro-536–Val-556 threads the bilayer. Residues Asn-557 to Asn-566 lie on the Cytoplasmic side of the membrane. Residues Trp-567–Tyr-587 traverse the membrane as a helical segment. Over Pro-588–Gly-606 the chain is Vacuolar.

The protein belongs to the Ca(2+):cation antiporter (CaCA) (TC 2.A.19) family.

Its subcellular location is the vacuole membrane. Its function is as follows. Has a role in promoting intracellular calcium ion sequestration via the exchange of calcium ions for hydrogen ions across the vacuolar membrane. In Cryptococcus neoformans var. grubii serotype A (strain H99 / ATCC 208821 / CBS 10515 / FGSC 9487) (Filobasidiella neoformans var. grubii), this protein is Vacuolar calcium ion transporter.